The chain runs to 244 residues: Cobalt transport protein CbiM (244 aa).

Positions 1–27 (MVEGMLKTNFRLLFLLIFLLIPTPVLA) are cleaved as a signal peptide. A run of 6 helical transmembrane segments spans residues 36-56 (PVKW…VGFI), 65-85 (GPGA…LSAL), 102-122 (LAAI…VLIF), 134-154 (TLGA…YGVY), 168-188 (IFLA…VQLA), and 196-216 (LFLS…PLAI).

Belongs to the CbiM family. As to quaternary structure, forms an energy-coupling factor (ECF) transporter complex composed of an ATP-binding protein (A component, CbiO), a transmembrane protein (T component, CbiQ) and 2 possible substrate-capture proteins (S components, CbiM and CbiN) of unknown stoichimetry.

It localises to the cell membrane. It functions in the pathway cofactor biosynthesis; adenosylcobalamin biosynthesis. Its function is as follows. Part of the energy-coupling factor (ECF) transporter complex CbiMNOQ involved in cobalt import. In Carboxydothermus hydrogenoformans (strain ATCC BAA-161 / DSM 6008 / Z-2901), this protein is Cobalt transport protein CbiM.